The following is a 493-amino-acid chain: tRNA(Ile)-lysidine synthase (493 aa).

Residue 26–31 (SGGSDS) participates in ATP binding.

It belongs to the tRNA(Ile)-lysidine synthase family.

Its subcellular location is the cytoplasm. It carries out the reaction cytidine(34) in tRNA(Ile2) + L-lysine + ATP = lysidine(34) in tRNA(Ile2) + AMP + diphosphate + H(+). Ligates lysine onto the cytidine present at position 34 of the AUA codon-specific tRNA(Ile) that contains the anticodon CAU, in an ATP-dependent manner. Cytidine is converted to lysidine, thus changing the amino acid specificity of the tRNA from methionine to isoleucine. The polypeptide is tRNA(Ile)-lysidine synthase (Bartonella henselae (strain ATCC 49882 / DSM 28221 / CCUG 30454 / Houston 1) (Rochalimaea henselae)).